A 514-amino-acid chain; its full sequence is CENP-B homolog protein 2 (514 aa).

Positions 70–145 (QIRRNRQGKY…KKRCLKHGLK (76 aa)) constitute an HTH CENPB-type domain. One can recognise a DDE-1 domain in the interval 172–384 (FDPKDIFNMD…FEPSIIYNCF (213 aa)).

The protein resides in the nucleus. It localises to the chromosome. It is found in the centromere. Binds to the central core and core-associated repeat regions of centromeric heterochromatin. This chain is CENP-B homolog protein 2 (cbh2), found in Schizosaccharomyces pombe (strain 972 / ATCC 24843) (Fission yeast).